Consider the following 200-residue polypeptide: MSCMPVSTKCNDIWVDFSCTGPSISELQKKEPKAWAAIVRSRTNQQTAEDDNIIGSICDKQGLCSKDEYAYSQYCACVNSGTLWAECAFAPCNGNKNAYKTTEQRNILTNKQCPSGLTICQNIAEYGGSGNISDLYQNFNCNSVINTFLINVMNHPFLTLILIILILIIIYRLMSSSSGGKHNDDKLPPPSLIFSNLNNF.

A glycan (N-linked (GlcNAc...) asparagine; by host) is linked at N131. The chain crosses the membrane as a helical span at residues 150–170 (INVMNHPFLTLILIILILIII).

Belongs to the asfivirus E199L family. As to quaternary structure, interacts with host PYCR2; this interaction results in autophagy activation. Contains intramolecular disulfide bonds.

It localises to the virion membrane. The protein resides in the host membrane. Essential for viral fusion with host endosomal membrane and core release. Not required for virus morphogenesis and egress. Induces complete autophagy through the interaction with and down-regulation of host PYCR2. This Ornithodoros (relapsing fever ticks) protein is Inner membrane protein E199L.